Reading from the N-terminus, the 357-residue chain is Palmitoyltransferase ZDHHC20-A (357 aa).

The Cytoplasmic portion of the chain corresponds to Met-1–Leu-14. The helical transmembrane segment at Ser-15–Val-35 threads the bilayer. Over Glu-36–Ile-50 the chain is Lumenal. Residues Tyr-51–Ser-71 form a helical membrane-spanning segment. Residues Ser-72–Lys-166 lie on the Cytoplasmic side of the membrane. Residues Arg-123–Ala-173 enclose the DHHC domain. The active-site S-palmitoyl cysteine intermediate is Cys-153. The chain crosses the membrane as a helical span at residues Phe-167–Leu-187. Topologically, residues Gln-188 to Lys-204 are lumenal. The helical transmembrane segment at Phe-205 to His-228 threads the bilayer. Residues Leu-229–Ser-357 lie on the Cytoplasmic side of the membrane.

The protein belongs to the DHHC palmitoyltransferase family.

The protein resides in the golgi apparatus membrane. The protein localises to the cell membrane. It localises to the cytoplasm. It is found in the perinuclear region. Its subcellular location is the endoplasmic reticulum membrane. The protein resides in the endoplasmic reticulum-Golgi intermediate compartment membrane. It carries out the reaction L-cysteinyl-[protein] + hexadecanoyl-CoA = S-hexadecanoyl-L-cysteinyl-[protein] + CoA. The catalysed reaction is L-cysteinyl-[protein] + tetradecanoyl-CoA = S-tetradecanoyl-L-cysteinyl-[protein] + CoA. The enzyme catalyses L-cysteinyl-[protein] + octadecanoyl-CoA = S-octadecanoyl-L-cysteinyl-[protein] + CoA. Palmitoyltransferase that could catalyze the addition of palmitate onto various protein substrates. Catalyzes palmitoylation of Cys residues on protein substrates and has a preference for acyl-CoA with C16 fatty acid chains but may also utilize acyl-CoA with C14 and C18 fatty acid chains. The chain is Palmitoyltransferase ZDHHC20-A from Danio rerio (Zebrafish).